We begin with the raw amino-acid sequence, 356 residues long: D-alanine--D-alanine ligase (356 aa).

The region spanning 134-339 is the ATP-grasp domain; the sequence is KQLFEHRGLP…YSDLITKLID (206 aa). 167–222 serves as a coordination point for ATP; that stretch reads KDKLTYPVFVKPANLGSSVGISKCNNEDELKSGIEEAFQFDRKLVIEQGINAREVE. Residues Asp293, Glu306, and Asn308 each coordinate Mg(2+).

This sequence belongs to the D-alanine--D-alanine ligase family. Mg(2+) serves as cofactor. It depends on Mn(2+) as a cofactor.

Its subcellular location is the cytoplasm. The catalysed reaction is 2 D-alanine + ATP = D-alanyl-D-alanine + ADP + phosphate + H(+). The protein operates within cell wall biogenesis; peptidoglycan biosynthesis. Cell wall formation. The chain is D-alanine--D-alanine ligase from Staphylococcus haemolyticus (strain JCSC1435).